The primary structure comprises 177 residues: Large ribosomal subunit protein uL6 (177 aa).

Belongs to the universal ribosomal protein uL6 family. As to quaternary structure, part of the 50S ribosomal subunit.

This protein binds to the 23S rRNA, and is important in its secondary structure. It is located near the subunit interface in the base of the L7/L12 stalk, and near the tRNA binding site of the peptidyltransferase center. The polypeptide is Large ribosomal subunit protein uL6 (Allorhizobium ampelinum (strain ATCC BAA-846 / DSM 112012 / S4) (Agrobacterium vitis (strain S4))).